We begin with the raw amino-acid sequence, 769 residues long: Trehalose 6-phosphate phosphorylase (769 aa).

342–343 lines the substrate pocket; that stretch reads WD. Glu-480 functions as the Proton donor in the catalytic mechanism. 589–590 provides a ligand contact to substrate; that stretch reads KQ.

Belongs to the glycosyl hydrolase 65 family. In terms of assembly, monomer.

It carries out the reaction alpha,alpha-trehalose 6-phosphate + phosphate = beta-D-glucose 1-phosphate + D-glucose 6-phosphate. Functionally, catalyzes the conversion of trehalose 6-phosphate into glucose 1-phosphate and glucose 6-phosphate. The protein is Trehalose 6-phosphate phosphorylase (trePP) of Lactococcus lactis subsp. lactis (strain IL1403) (Streptococcus lactis).